A 264-amino-acid chain; its full sequence is Apolipoprotein A-I (264 aa).

A signal peptide spans 1–18; it reads MRGVLVTLAVLFLTGTQA. Repeat copies occupy residues 67 to 88 and 89 to 110. The tract at residues 67 to 264 is 10 X approximate tandem repeats; sequence LKLADNLDTL…LLDEVQKTMA (198 aa). One copy of the 3; half-length repeat lies at 111–121; it reads KDLEEVKEKIR. A run of 5 repeats spans residues 122 to 143, 144 to 165, 166 to 187, 188 to 209, and 210 to 231. A 9; half-length repeat occupies 232–242; sequence PLVQEFKERLT. Residues 243 to 264 form repeat 10; it reads PYAENLKNRLIDLLDEVQKTMA.

The protein belongs to the apolipoprotein A1/A4/E family. As to expression, major protein of VLDL, HDL, LDL and in chylomicrons. Expressed in a number of tissues including liver, small intestine, lung, kidney, heart and muscle with highest expression in liver and small intestine.

The protein resides in the secreted. Participates in the reverse transport of cholesterol from tissues to the liver for excretion by promoting cholesterol efflux from tissues and by acting as a cofactor for the lecithin cholesterol acyltransferase (LCAT). In Coturnix japonica (Japanese quail), this protein is Apolipoprotein A-I (APOA1).